Consider the following 177-residue polypeptide: Small ribosomal subunit protein uS13 (177 aa).

The segment covering G132–R145 has biased composition (basic residues). Positions G132–E177 are disordered. Residues Q167–E177 show a composition bias toward acidic residues.

The protein belongs to the universal ribosomal protein uS13 family. In terms of assembly, part of the 30S ribosomal subunit. Forms a loose heterodimer with protein S19. Forms two bridges to the 50S subunit in the 70S ribosome.

Its function is as follows. Located at the top of the head of the 30S subunit, it contacts several helices of the 16S rRNA. In the 70S ribosome it contacts the 23S rRNA (bridge B1a) and protein L5 of the 50S subunit (bridge B1b), connecting the 2 subunits; these bridges are implicated in subunit movement. This is Small ribosomal subunit protein uS13 from Haloarcula marismortui (strain ATCC 43049 / DSM 3752 / JCM 8966 / VKM B-1809) (Halobacterium marismortui).